Reading from the N-terminus, the 113-residue chain is Large ribosomal subunit protein uL22 (113 aa).

It belongs to the universal ribosomal protein uL22 family. In terms of assembly, part of the 50S ribosomal subunit.

This protein binds specifically to 23S rRNA; its binding is stimulated by other ribosomal proteins, e.g. L4, L17, and L20. It is important during the early stages of 50S assembly. It makes multiple contacts with different domains of the 23S rRNA in the assembled 50S subunit and ribosome. Its function is as follows. The globular domain of the protein is located near the polypeptide exit tunnel on the outside of the subunit, while an extended beta-hairpin is found that lines the wall of the exit tunnel in the center of the 70S ribosome. This Symbiobacterium thermophilum (strain DSM 24528 / JCM 14929 / IAM 14863 / T) protein is Large ribosomal subunit protein uL22.